Reading from the N-terminus, the 670-residue chain is Leucine zipper putative tumor suppressor 2 (670 aa).

Disordered stretches follow at residues M1–G52, N92–S131, and P150–E323. Residues M1–K333 form a required for centrosomal localization region. Positions A187–A199 are enriched in low complexity. The segment covering P213 to T233 has biased composition (polar residues). 2 stretches are compositionally biased toward low complexity: residues S242–G251 and P260–R310. Residues S249 and S296 each carry the phosphoserine modification. The span at S311–S321 shows a compositional bias: pro residues. The stretch at V329 to D650 forms a coiled coil. The segment at S448–I670 is sufficient for interaction with CTNNB1. Positions I451 to I670 are sufficient for interaction with KATNB1 and for inhibition of katanin-mediated microtubule severing. A Phosphoserine modification is found at S571. A Nuclear export signal motif is present at residues L632–L641.

Belongs to the LZTS2 family. As to quaternary structure, interacts with CTNNB1. Interacts with KATNB1. Also interacts with gamma-tubulin and KIF23.

It is found in the cytoplasm. The protein resides in the cytoskeleton. It localises to the microtubule organizing center. Its subcellular location is the centrosome. Its function is as follows. Negative regulator of katanin-mediated microtubule severing and release from the centrosome. Required for central spindle formation and the completion of cytokinesis. May negatively regulate axonal outgrowth by preventing the formation of microtubule bundles that are necessary for transport within the elongating axon. Negative regulator of the Wnt signaling pathway. Represses beta-catenin-mediated transcriptional activation by promoting the nuclear exclusion of beta-catenin. The chain is Leucine zipper putative tumor suppressor 2 (Lzts2) from Rattus norvegicus (Rat).